We begin with the raw amino-acid sequence, 819 residues long: Outer membrane usher protein CssD (819 aa).

It belongs to the fimbrial export usher family.

The protein resides in the cell outer membrane. Involved in the export and assembly of C6 fimbrial subunits across the outer membrane. This chain is Outer membrane usher protein CssD (cssD), found in Escherichia coli.